Reading from the N-terminus, the 194-residue chain is Probable GTP-binding protein EngB (194 aa).

One can recognise an EngB-type G domain in the interval 22–194; the sequence is DLPEYALAGR…AWQFIKEGME (173 aa). GTP-binding positions include 30–37, 57–61, 75–78, 142–145, and 174–176; these read GRSNVGKS, GKTQT, DVPG, TKAD, and FSS. Positions 37 and 59 each coordinate Mg(2+).

The protein belongs to the TRAFAC class TrmE-Era-EngA-EngB-Septin-like GTPase superfamily. EngB GTPase family. The cofactor is Mg(2+).

Its function is as follows. Necessary for normal cell division and for the maintenance of normal septation. The chain is Probable GTP-binding protein EngB from Listeria monocytogenes serovar 1/2a (strain ATCC BAA-679 / EGD-e).